The chain runs to 136 residues: ATP synthase epsilon chain (136 aa).

It belongs to the ATPase epsilon chain family. In terms of assembly, F-type ATPases have 2 components, CF(1) - the catalytic core - and CF(0) - the membrane proton channel. CF(1) has five subunits: alpha(3), beta(3), gamma(1), delta(1), epsilon(1). CF(0) has three main subunits: a, b and c.

It localises to the cell inner membrane. In terms of biological role, produces ATP from ADP in the presence of a proton gradient across the membrane. This is ATP synthase epsilon chain from Agrobacterium fabrum (strain C58 / ATCC 33970) (Agrobacterium tumefaciens (strain C58)).